The following is a 144-amino-acid chain: D-aminoacyl-tRNA deacylase (144 aa).

The Gly-cisPro motif, important for rejection of L-amino acids motif lies at Gly136–Pro137.

It belongs to the DTD family. In terms of assembly, homodimer.

The protein resides in the cytoplasm. The catalysed reaction is glycyl-tRNA(Ala) + H2O = tRNA(Ala) + glycine + H(+). The enzyme catalyses a D-aminoacyl-tRNA + H2O = a tRNA + a D-alpha-amino acid + H(+). An aminoacyl-tRNA editing enzyme that deacylates mischarged D-aminoacyl-tRNAs. Also deacylates mischarged glycyl-tRNA(Ala), protecting cells against glycine mischarging by AlaRS. Acts via tRNA-based rather than protein-based catalysis; rejects L-amino acids rather than detecting D-amino acids in the active site. By recycling D-aminoacyl-tRNA to D-amino acids and free tRNA molecules, this enzyme counteracts the toxicity associated with the formation of D-aminoacyl-tRNA entities in vivo and helps enforce protein L-homochirality. The polypeptide is D-aminoacyl-tRNA deacylase (Pasteurella multocida (strain Pm70)).